We begin with the raw amino-acid sequence, 899 residues long: Nuclear factor NF-kappa-B p100 subunit (899 aa).

Phosphoserine is present on residues Ser23 and Ser161. The RHD domain maps to 35–224; the sequence is ADGPYLVIVE…QPIHDSKSPG (190 aa). Residues 337 to 341 carry the Nuclear localization signal motif; that stretch reads RKRRK. The GRR stretch occupies residues 346–377; that stretch reads FSQPFGGGSHMGGGSGGSAGGYGGAGGGGSLG. Positions 403-434 are disordered; it reads GGAQMAGSRRDTDAGEGAEEPRTPPEAPQGEP. Positions 410 to 425 are enriched in basic and acidic residues; it reads SRRDTDAGEGAEEPRT. Thr425 carries the phosphothreonine modification. ANK repeat units lie at residues 487–516, 526–555, 559–590, 599–628, 633–663, and 667–696; these read NGDTPLHLAIIHGQTGVIEQIAHVIYHAQY, LHQTPLHLAVITGQTRVVSFLLQVGADPTL, HGDSALHLALRAGAAAPELLQALLRSGAHAVP, EGLYPVHLAVHARSPECLDLLVDCGAEVEA, GGRTALHLATEMEELGLVTHLVTKLHANVNA, and AGNTPLHLAAGLGSPTLTRLLLKAGADIHA. The interval 698 to 734 is disordered; the sequence is NEEPLCPLPSPSTSGSDSDSEGPERDTQRNFRGHTPL. Phosphoserine is present on residues Ser713, Ser715, and Ser717. One copy of the ANK 7 repeat lies at 729–755; that stretch reads RGHTPLDLTCSTKVKTLLLNAAQNTTE. Positions 764–851 constitute a Death domain; sequence AGPGLSLGDA…EGVRLLKGPE (88 aa). A Phosphoserine modification is found at Ser812. The segment covering 851-865 has biased composition (basic and acidic residues); it reads ETRDKLPSTEVKEDS. Residues 851 to 899 form a disordered region; sequence ETRDKLPSTEVKEDSAYGSQSVEQEAEKLCPPPEPPGGLCHGHPQPQVH. Lys855 is covalently cross-linked (Glycyl lysine isopeptide (Lys-Gly) (interchain with G-Cter in ubiquitin)). Ser865 and Ser869 each carry phosphoserine; by MAP3K14. Residues 887–899 show a composition bias toward low complexity; sequence GGLCHGHPQPQVH.

As to quaternary structure, component of the NF-kappa-B RelB-p52 complex. Homodimer; component of the NF-kappa-B p52-p52 complex. Component of the NF-kappa-B p65-p52 complex. Component of the NF-kappa-B p52-c-Rel complex. NFKB2/p52 interacts with NFKBIE. Component of a complex consisting of the NF-kappa-B p50-p50 homodimer and BCL3. Directly interacts with MEN1. In terms of processing, while translation occurs, the particular unfolded structure after the GRR repeat promotes the generation of p52 making it an acceptable substrate for the proteasome. This process is known as cotranslational processing. The processed form is active and the unprocessed form acts as an inhibitor (I kappa B-like), being able to form cytosolic complexes with NF-kappa B, trapping it in the cytoplasm. Complete folding of the region downstream of the GRR repeat precludes processing. Post-translationally, subsequent to MAP3K14-dependent serine phosphorylation, p100 polyubiquitination occurs then triggering its proteasome-dependent processing. Constitutive processing is tightly suppressed by its C-terminal processing inhibitory domain, named PID, which contains the death domain. In terms of processing, ubiquitinated by TRIM55; leading to processing by VCP and subsequent ubiquitin-dependent protein degradation by the proteasome. Highly expressed in lymph nodes and thymus.

It is found in the nucleus. It localises to the cytoplasm. NF-kappa-B is a pleiotropic transcription factor present in almost all cell types and is the endpoint of a series of signal transduction events that are initiated by a vast array of stimuli related to many biological processes such as inflammation, immunity, differentiation, cell growth, tumorigenesis and apoptosis. NF-kappa-B is a homo- or heterodimeric complex formed by the Rel-like domain-containing proteins RELA/p65, RELB, NFKB1/p105, NFKB1/p50, REL and NFKB2/p52. The dimers bind at kappa-B sites in the DNA of their target genes and the individual dimers have distinct preferences for different kappa-B sites that they can bind with distinguishable affinity and specificity. Different dimer combinations act as transcriptional activators or repressors, respectively. NF-kappa-B is controlled by various mechanisms of post-translational modification and subcellular compartmentalization as well as by interactions with other cofactors or corepressors. NF-kappa-B complexes are held in the cytoplasm in an inactive state complexed with members of the NF-kappa-B inhibitor (I-kappa-B) family. In a conventional activation pathway, I-kappa-B is phosphorylated by I-kappa-B kinases (IKKs) in response to different activators, subsequently degraded thus liberating the active NF-kappa-B complex which translocates to the nucleus. In a non-canonical activation pathway, the MAP3K14-activated CHUK/IKKA homodimer phosphorylates NFKB2/p100 associated with RelB, inducing its proteolytic processing to NFKB2/p52 and the formation of NF-kappa-B RelB-p52 complexes. The NF-kappa-B heterodimeric RelB-p52 complex is a transcriptional activator. The NF-kappa-B p52-p52 homodimer is a transcriptional repressor. NFKB2 appears to have dual functions such as cytoplasmic retention of attached NF-kappa-B proteins by p100 and generation of p52 by a cotranslational processing. The proteasome-mediated process ensures the production of both p52 and p100 and preserves their independent function. p52 binds to the kappa-B consensus sequence 5'-GGRNNYYCC-3', located in the enhancer region of genes involved in immune response and acute phase reactions. p52 and p100 are respectively the minor and major form; the processing of p100 being relatively poor. Isoform p49 is a subunit of the NF-kappa-B protein complex, which stimulates the HIV enhancer in synergy with p65. In concert with RELB, regulates the circadian clock by repressing the transcriptional activator activity of the CLOCK-BMAL1 heterodimer. The polypeptide is Nuclear factor NF-kappa-B p100 subunit (Nfkb2) (Mus musculus (Mouse)).